The sequence spans 414 residues: Glucose-1-phosphate adenylyltransferase (414 aa).

Residues Tyr99, Gly164, 181–182 (EK), and Ser199 contribute to the alpha-D-glucose 1-phosphate site.

This sequence belongs to the bacterial/plant glucose-1-phosphate adenylyltransferase family. Homotetramer.

The catalysed reaction is alpha-D-glucose 1-phosphate + ATP + H(+) = ADP-alpha-D-glucose + diphosphate. The protein operates within glycan biosynthesis; glycogen biosynthesis. In terms of biological role, involved in the biosynthesis of ADP-glucose, a building block required for the elongation reactions to produce glycogen. Catalyzes the reaction between ATP and alpha-D-glucose 1-phosphate (G1P) to produce pyrophosphate and ADP-Glc. This is Glucose-1-phosphate adenylyltransferase from Bifidobacterium longum (strain DJO10A).